Consider the following 332-residue polypeptide: Protein pelota homolog (332 aa).

Belongs to the eukaryotic release factor 1 family. Pelota subfamily. Monomer. A divalent metal cation is required as a cofactor.

Its subcellular location is the cytoplasm. May function in recognizing stalled ribosomes, interact with stem-loop structures in stalled mRNA molecules, and effect endonucleolytic cleavage of the mRNA. May play a role in the release non-functional ribosomes and degradation of damaged mRNAs. Has endoribonuclease activity. This Pyrobaculum calidifontis (strain DSM 21063 / JCM 11548 / VA1) protein is Protein pelota homolog.